The primary structure comprises 449 residues: Probable cysteine proteinase 224L (449 aa).

Residues Cys99, His292, and Asn322 contribute to the active site. The chain crosses the membrane as a helical span at residues Asp429 to Leu449.

This sequence belongs to the peptidase C1 family.

The protein localises to the membrane. Its function is as follows. Probable cysteine protease. The polypeptide is Probable cysteine proteinase 224L (Acheta domesticus (House cricket)).